Reading from the N-terminus, the 324-residue chain is Phthalate 4,5-dioxygenase oxygenase reductase subunit (324 aa).

The FAD-binding FR-type domain maps to 9–111; it reads DGFTGLKVIA…ATPQNEFELI (103 aa). 115 to 229 contributes to the NAD(+) binding site; the sequence is RQFIFVAGGI…PGSIHFESFG (115 aa). The 2Fe-2S ferredoxin-type domain maps to 241–324; it reads FSVTLGRSGI…ARNDVLVLDL (84 aa). 4 residues coordinate [2Fe-2S] cluster: Cys-275, Cys-280, Cys-283, and Cys-311.

It belongs to the PDR/VanB family. As to quaternary structure, this dioxygenase system consists of two proteins: phthalate oxygenase and phthalate oxygenase reductase. Requires FMN as cofactor.

It catalyses the reaction phthalate + NADH + O2 + H(+) = cis-4,5-dihydroxycyclohexa-2,6-diene-1,2-dicarboxylate + NAD(+). The protein operates within xenobiotic degradation; phthalate degradation; 3,4-dihydroxybenzoate from phthalate: step 1/3. The polypeptide is Phthalate 4,5-dioxygenase oxygenase reductase subunit (pht2) (Pseudomonas putida (Arthrobacter siderocapsulatus)).